A 105-amino-acid chain; its full sequence is Small ribosomal subunit protein uS10 (105 aa).

This sequence belongs to the universal ribosomal protein uS10 family. In terms of assembly, part of the 30S ribosomal subunit.

In terms of biological role, involved in the binding of tRNA to the ribosomes. In Agathobacter rectalis (strain ATCC 33656 / DSM 3377 / JCM 17463 / KCTC 5835 / VPI 0990) (Eubacterium rectale), this protein is Small ribosomal subunit protein uS10.